Consider the following 380-residue polypeptide: Chaperone protein DnaJ (380 aa).

A J domain is found at 5 to 70 (DYYEVLGVSK…QKRQTYDQYG (66 aa)). A CR-type zinc finger spans residues 136–214 (GKEVEIKIPT…CHGQGRVEKT (79 aa)). Zn(2+) contacts are provided by cysteine 149, cysteine 152, cysteine 166, cysteine 169, cysteine 188, cysteine 191, cysteine 202, and cysteine 205. CXXCXGXG motif repeat units follow at residues 149 to 156 (CDPCDGSG), 166 to 173 (CTTCHGAG), 188 to 195 (CPTCQGQG), and 202 to 209 (CDSCHGQG).

Belongs to the DnaJ family. In terms of assembly, homodimer. Requires Zn(2+) as cofactor.

The protein resides in the cytoplasm. Its function is as follows. Participates actively in the response to hyperosmotic and heat shock by preventing the aggregation of stress-denatured proteins and by disaggregating proteins, also in an autonomous, DnaK-independent fashion. Unfolded proteins bind initially to DnaJ; upon interaction with the DnaJ-bound protein, DnaK hydrolyzes its bound ATP, resulting in the formation of a stable complex. GrpE releases ADP from DnaK; ATP binding to DnaK triggers the release of the substrate protein, thus completing the reaction cycle. Several rounds of ATP-dependent interactions between DnaJ, DnaK and GrpE are required for fully efficient folding. Also involved, together with DnaK and GrpE, in the DNA replication of plasmids through activation of initiation proteins. In Pseudoalteromonas translucida (strain TAC 125), this protein is Chaperone protein DnaJ.